Here is a 212-residue protein sequence, read N- to C-terminus: Nitrile hydratase subunit beta (212 aa).

It belongs to the nitrile hydratase subunit beta family. Heterodimer of an alpha and a beta chain.

The catalysed reaction is an aliphatic primary amide = an aliphatic nitrile + H2O. Functionally, NHase catalyzes the hydration of various nitrile compounds to the corresponding amides. In Rhodococcus erythropolis (Arthrobacter picolinophilus), this protein is Nitrile hydratase subunit beta (nthB).